Consider the following 345-residue polypeptide: Centromere protein U (345 aa).

Composition is skewed to basic residues over residues 1 to 10 (MSSKKRTKRN) and 19 to 29 (HKGRSHPRRKF). Disordered stretches follow at residues 1-37 (MSSKKRTKRNRAGDEYKEHKGRSHPRRKFLPPEEPDV) and 64-153 (AVDA…SSVQ). Residues 88-106 (NAERSEKMLLETPEGDVHE) are compositionally biased toward basic and acidic residues. The span at 142–152 (SDSSVNSPSSV) shows a compositional bias: low complexity. Residues 201–294 (CSAFEDQVTD…QDYLDYREEN (94 aa)) adopt a coiled-coil conformation. A Nuclear localization signal motif is present at residues 222 to 239 (KKKNAKVVADIKKKRQRL).

It belongs to the CENP-U/AME1 family. Interacts with CENPH-CENPI complex at the kinetochore.

It is found in the nucleus. The protein resides in the chromosome. The protein localises to the centromere. Its function is as follows. Probable component of a centromeric complex involved in assembly of kinetochore proteins, mitotic progression and chromosome segregation. Required for maintenance of sister chromatid adhesion during mitotic checkpoint activation. The chain is Centromere protein U (CENPU) from Gallus gallus (Chicken).